The chain runs to 238 residues: Protein shisa-3 homolog (238 aa).

The signal sequence occupies residues 1–21 (MGALLAFCLLVGLLRWGPAGA). Residues 22–98 (QQPGEYCHGW…GITAQPVYVP (77 aa)) lie on the Lumenal side of the membrane. A helical membrane pass occupies residues 99 to 119 (FLIVGSIFIAFIILGSLVAIY). At 120–238 (CCTCLRPKEP…GKSCPDFSSS (119 aa)) the chain is on the cytoplasmic side.

The protein belongs to the shisa family.

It localises to the endoplasmic reticulum membrane. Plays an essential role in the maturation of presomitic mesoderm cells by individual attenuation of both FGF and WNT signaling. This is Protein shisa-3 homolog (Shisa3) from Mus musculus (Mouse).